Consider the following 1091-residue polypeptide: Methionine S-methyltransferase (1091 aa).

The protein belongs to the class I-like SAM-binding methyltransferase superfamily. In terms of assembly, homotetramer.

The protein localises to the cytoplasm. The catalysed reaction is L-methionine + S-adenosyl-L-methionine = S-methyl-L-methionine + S-adenosyl-L-homocysteine. Catalyzes the S-methylmethionine (SMM) biosynthesis from adenosyl-L-homocysteine (AdoMet) and methionine. SMM biosynthesis (by MMT1) and degradation (by HMT-1, HMT-2 and HMT-3) constitute the SMM cycle in plants, which is probably required to achieve short term control of AdoMet level. Also able to catalyze the selenium-methylmethionine (SeMM) from AdoMet and selenium-methionine (SeMet). May play a role in phoem sulfur transport; such function is however not essential. The protein is Methionine S-methyltransferase (MMT1) of Zea mays (Maize).